The chain runs to 270 residues: 3-methyl-2-oxobutanoate hydroxymethyltransferase (270 aa).

Asp41 and Asp80 together coordinate Mg(2+). Residues 41–42 (DS), Asp80, and Lys109 each bind 3-methyl-2-oxobutanoate. Position 111 (Glu111) interacts with Mg(2+). Glu178 serves as the catalytic Proton acceptor.

It belongs to the PanB family. In terms of assembly, homodecamer; pentamer of dimers. The cofactor is Mg(2+).

It localises to the cytoplasm. The catalysed reaction is 3-methyl-2-oxobutanoate + (6R)-5,10-methylene-5,6,7,8-tetrahydrofolate + H2O = 2-dehydropantoate + (6S)-5,6,7,8-tetrahydrofolate. Its pathway is cofactor biosynthesis; (R)-pantothenate biosynthesis; (R)-pantoate from 3-methyl-2-oxobutanoate: step 1/2. Catalyzes the reversible reaction in which hydroxymethyl group from 5,10-methylenetetrahydrofolate is transferred onto alpha-ketoisovalerate to form ketopantoate. This Thermotoga sp. (strain RQ2) protein is 3-methyl-2-oxobutanoate hydroxymethyltransferase.